Here is a 277-residue protein sequence, read N- to C-terminus: Large ribosomal subunit protein uL2c (277 aa).

Disordered regions lie at residues 24-57 (IVQS…RGGG) and 226-266 (NAAD…HKYS).

The protein belongs to the universal ribosomal protein uL2 family. Part of the 50S ribosomal subunit.

The protein localises to the plastid. It is found in the chloroplast. This chain is Large ribosomal subunit protein uL2c (rpl2), found in Zygnema circumcarinatum (Green alga).